Consider the following 89-residue polypeptide: Small ribosomal subunit protein uS15 (89 aa).

The protein belongs to the universal ribosomal protein uS15 family. Part of the 30S ribosomal subunit. Forms a bridge to the 50S subunit in the 70S ribosome, contacting the 23S rRNA.

One of the primary rRNA binding proteins, it binds directly to 16S rRNA where it helps nucleate assembly of the platform of the 30S subunit by binding and bridging several RNA helices of the 16S rRNA. Functionally, forms an intersubunit bridge (bridge B4) with the 23S rRNA of the 50S subunit in the ribosome. The polypeptide is Small ribosomal subunit protein uS15 (Salmonella schwarzengrund (strain CVM19633)).